The following is a 370-amino-acid chain: Cytochrome b (370 aa).

The next 4 helical transmembrane spans lie at phenylalanine 25–valine 45, tryptophan 69–isoleucine 90, tryptophan 105–leucine 125, and phenylalanine 170–leucine 190. Histidine 75 and histidine 89 together coordinate heme b. 2 residues coordinate heme b: histidine 174 and histidine 188. Histidine 193 contributes to the a ubiquinone binding site. A run of 4 helical transmembrane segments spans residues tyrosine 218–phenylalanine 238, leucine 280–histidine 300, phenylalanine 312–threonine 332, and phenylalanine 339–proline 358.

The protein belongs to the cytochrome b family. The cytochrome bc1 complex contains 3 respiratory subunits (MT-CYB, CYC1 and UQCRFS1), 2 core proteins (UQCRC1 and UQCRC2) and probably 6 low-molecular weight proteins. Heme b is required as a cofactor.

The protein localises to the mitochondrion inner membrane. Its function is as follows. Component of the ubiquinol-cytochrome c reductase complex (complex III or cytochrome b-c1 complex) that is part of the mitochondrial respiratory chain. The b-c1 complex mediates electron transfer from ubiquinol to cytochrome c. Contributes to the generation of a proton gradient across the mitochondrial membrane that is then used for ATP synthesis. This chain is Cytochrome b (MT-CYB), found in Chilabothrus strigilatus mccraniei (Ragged Island boa constrictor).